A 288-amino-acid polypeptide reads, in one-letter code: UPF0276 protein VP3015 (288 aa).

It belongs to the UPF0276 family.

This chain is UPF0276 protein VP3015, found in Vibrio parahaemolyticus serotype O3:K6 (strain RIMD 2210633).